The primary structure comprises 952 residues: Substrate-adhesion molecule (952 aa).

The signal sequence occupies residues 1 to 25; sequence MKSQKIGSMILLIGILLAIFNFAYS. Residues 26–527 lie on the Extracellular side of the membrane; that stretch reads DDDIERFSIN…TWFFDTNVET (502 aa). 5 N-linked (GlcNAc...) asparagine glycosylation sites follow: N78, N182, N231, N243, and N412. The 34-residue stretch at 438-471 folds into the EGF-like domain; it reads EIRRCKDSCNGYGTCNTANYTCVCDSAHMGETCN. 3 disulfide bridges follow: C442–C452, C446–C459, and C461–C470. N-linked (GlcNAc...) asparagine glycosylation is present at N456. Residues 528-548 traverse the membrane as a helical segment; the sequence is GVIALACIFIAFVGILYIIDI. The Cytoplasmic segment spans residues 549–591; that stretch reads GTTVPIDIKRAKDYAEENKSGQFPKATHEEASVLWWRDQRSHK. The chain crosses the membrane as a helical span at residues 592 to 612; that stretch reads AWTFMDQFQLISLVSHIGVVF. Topologically, residues 613–678 are extracellular; the sequence is PSRFISFTEY…GDLYLLPNIL (66 aa). Residues 679–699 traverse the membrane as a helical segment; the sequence is FWFGLLLGVFLVPLLLAYAII. The Cytoplasmic segment spans residues 700 to 722; the sequence is SFMESLIHWKEVVTNRLIHVLVR. Residues 723–743 traverse the membrane as a helical segment; sequence ILTFGYIGVLIAASFAMVTPL. Residues 744 to 752 are Extracellular-facing; the sequence is HDYRIIIPG. The helical transmembrane segment at 753-773 threads the bilayer; it reads AIIFVLYGIGLPIAIWFLLAV. Over 774 to 801 the chain is Cytoplasmic; that stretch reads PEARLHNPTFKQRFGCLYVHYKPKTDHR. Residues 802-822 traverse the membrane as a helical segment; it reads FVVFMFIKRFIMAVIIGILSF. Residues 823-837 are Extracellular-facing; sequence KPMTNYPLTGTDLAV. Residues 838 to 858 traverse the membrane as a helical segment; it reads PIVQVVVIDIALIGYAVLLFI. At 859-868 the chain is on the cytoplasmic side; sequence RKPYFDHYQL. A helical membrane pass occupies residues 869 to 889; it reads WLEYLLTAINIVTVSLSLTHI. The Extracellular portion of the chain corresponds to 890-897; it reads KSPSAAGE. The chain crosses the membrane as a helical span at residues 898–918; the sequence is LIACLIQALALVACIAAYVVA. Over 919 to 952 the chain is Cytoplasmic; sequence WLQMRSSFIKKVKKYLCCCCKSSKSSGEIDLSKK.

The protein resides in the cell membrane. Involved in substrate adhesion, myosin-independent cytokinesis, organization of actin cytoskeleton, and phagocytosis. The chain is Substrate-adhesion molecule (sadA) from Dictyostelium discoideum (Social amoeba).